A 218-amino-acid chain; its full sequence is Peroxiredoxin-like 2A (218 aa).

The thioredoxin-like fold stretch occupies residues 3 to 101; the sequence is MWSIGVGAVG…DELGVPLYAV (99 aa). Catalysis depends on redox-active residues Cys-74 and Cys-77.

The protein belongs to the peroxiredoxin-like PRXL2 family. PRXL2A subfamily. As to expression, expressed in kidney, liver, skin, and brain. Widely expressed with highest levels detected in adipose tissue.

It is found in the cytoplasm. It localises to the secreted. Its function is as follows. Involved in redox regulation of the cell. Acts as an antioxidant. Inhibits TNFSF11-induced NFKB1 and JUN activation and osteoclast differentiation. May affect bone resorption and help to maintain bone mass. Acts as a negative regulator of macrophage-mediated inflammation by inhibiting macrophage production of inflammatory cytokines, probably through suppression of the MAPK signaling pathway. The polypeptide is Peroxiredoxin-like 2A (Prxl2a) (Mus musculus (Mouse)).